A 396-amino-acid chain; its full sequence is MKFVDEASIYVRAGKGGNGALSFWREKFVAKGGPDGGDGGNGGSVVLVADEALNTLIDFRFTKKYIAESGEGGQGRDMTGSKGADLEIKVPVGTTVIDEDTGETLGDLVRDGQKLKVAQGGHHGLGNTRFKSSTNRAPRQTTKGTVGEERTLKLEMKVLADVGLLGLPNAGKSTFIRAVSSAKPKVADYPFTTLVPNLGVVKVKKHQSFVIADIPGIIEGASEGAGLGIRFLKHLVRNRILLHIVDLAPWDEITPAEAAVIAVNELHQFSPALAERERWLVLNKTDMVPEDELEERCQSVIDALGWEGKAYRISAISGEGTEVLCLDLMTALDEKRELLLESPEAREKEKAVRALIDEEGRNRIMSLREKRRKAGLLLDDDDFDEDDYDVEVEYVS.

Residues 1 to 159 form the Obg domain; the sequence is MKFVDEASIY…RTLKLEMKVL (159 aa). Positions 120–146 are disordered; sequence GGHHGLGNTRFKSSTNRAPRQTTKGTV. Positions 129-144 are enriched in polar residues; the sequence is RFKSSTNRAPRQTTKG. Residues 160–333 form the OBG-type G domain; the sequence is ADVGLLGLPN…LCLDLMTALD (174 aa). Residues 166 to 173, 191 to 195, 213 to 216, 283 to 286, and 314 to 316 contribute to the GTP site; these read GLPNAGKS, FTTLV, DIPG, NKTD, and SAI. Mg(2+) is bound by residues S173 and T193.

The protein belongs to the TRAFAC class OBG-HflX-like GTPase superfamily. OBG GTPase family. As to quaternary structure, monomer. It depends on Mg(2+) as a cofactor.

The protein localises to the cytoplasm. Functionally, an essential GTPase which binds GTP, GDP and possibly (p)ppGpp with moderate affinity, with high nucleotide exchange rates and a fairly low GTP hydrolysis rate. Plays a role in control of the cell cycle, stress response, ribosome biogenesis and in those bacteria that undergo differentiation, in morphogenesis control. This Marinomonas sp. (strain MWYL1) protein is GTPase Obg.